We begin with the raw amino-acid sequence, 560 residues long: Membrane protein insertase YidC (560 aa).

The next 6 membrane-spanning stretches (helical) occupy residues 5-25 (IINL…WQYF), 334-354 (AIDF…MNFF), 357-377 (YVGN…LLMF), 431-451 (LPIL…YVTI), 476-496 (LFGL…WPIL), and 522-542 (FMPL…LIYW).

This sequence belongs to the OXA1/ALB3/YidC family. Type 1 subfamily. In terms of assembly, interacts with the Sec translocase complex via SecD. Specifically interacts with transmembrane segments of nascent integral membrane proteins during membrane integration.

The protein localises to the cell inner membrane. Functionally, required for the insertion and/or proper folding and/or complex formation of integral membrane proteins into the membrane. Involved in integration of membrane proteins that insert both dependently and independently of the Sec translocase complex, as well as at least some lipoproteins. Aids folding of multispanning membrane proteins. The polypeptide is Membrane protein insertase YidC (Rickettsia felis (strain ATCC VR-1525 / URRWXCal2) (Rickettsia azadi)).